Reading from the N-terminus, the 465-residue chain is UDP-N-acetylmuramoylalanine--D-glutamate ligase (465 aa).

127–133 is a binding site for ATP; sequence GSNGKST.

It belongs to the MurCDEF family.

Its subcellular location is the cytoplasm. It carries out the reaction UDP-N-acetyl-alpha-D-muramoyl-L-alanine + D-glutamate + ATP = UDP-N-acetyl-alpha-D-muramoyl-L-alanyl-D-glutamate + ADP + phosphate + H(+). The protein operates within cell wall biogenesis; peptidoglycan biosynthesis. Cell wall formation. Catalyzes the addition of glutamate to the nucleotide precursor UDP-N-acetylmuramoyl-L-alanine (UMA). In Cereibacter sphaeroides (strain KD131 / KCTC 12085) (Rhodobacter sphaeroides), this protein is UDP-N-acetylmuramoylalanine--D-glutamate ligase.